Consider the following 459-residue polypeptide: Cysteine--tRNA ligase (459 aa).

A Zn(2+)-binding site is contributed by Cys28. A 'HIGH' region motif is present at residues 30–40 (VTIYDLCHIGH). Zn(2+)-binding residues include Cys209, His234, and Glu238. A 'KMSKS' region motif is present at residues 266–270 (KMSKS). Lys269 is a binding site for ATP.

It belongs to the class-I aminoacyl-tRNA synthetase family. As to quaternary structure, monomer. Zn(2+) serves as cofactor.

It is found in the cytoplasm. The catalysed reaction is tRNA(Cys) + L-cysteine + ATP = L-cysteinyl-tRNA(Cys) + AMP + diphosphate. This chain is Cysteine--tRNA ligase, found in Shewanella baltica (strain OS155 / ATCC BAA-1091).